The sequence spans 410 residues: Voltage-dependent chloride channel 1, chloroplastic (410 aa).

Topologically, residues 1–110 are lumenal, thylakoid; the sequence is MYQSMNLSVS…RHLLSSFSSR (110 aa). Residues 111–131 traverse the membrane as a helical segment; that stretch reads VILSLIPPVFFFTSVAVVIAS. Residues 132 to 147 are Stromal-facing; it reads YNSAVALDWLPGIFPI. Residues 148–168 form a helical membrane-spanning segment; sequence LRSSSLPYQLTAPALALLLVF. Topologically, residues 169 to 315 are lumenal, thylakoid; it reads RTEASYSRYE…PLSYTRLTSR (147 aa). 2 consecutive transmembrane segments (helical) span residues 316 to 336 and 337 to 357; these read FLVFWHLTLPIILWDECHWIV and VPATFISAASLFCIEEVGVLI. Residues 358–410 are Lumenal, thylakoid-facing; it reads EEPFPMLALDELCDLVHSNIQEAVKSEKVIRNRIIAKIKLHEFKHSSNGRHRS.

It belongs to the anion channel-forming bestrophin (TC 1.A.46) family. Voltage-dependent chloride channel subfamily. Mostly expressed in flowers and leaves and, to a lower extent, in stems and roots.

The protein resides in the plastid. The protein localises to the chloroplast thylakoid membrane. It catalyses the reaction chloride(in) = chloride(out). With respect to regulation, more active at positive than at negative voltages. Repressed by the general anion channel inhibitors dithiocyanatostilbene-2,20-disulphonic acid (DIDS) and niflumic acid. Its function is as follows. Voltage-dependent chloride (Cl) channel critical for proton motive force (PMF) partitioning across the thylakoid membrane by anion influx into the lumen during illumination, thus being required for photoprotection under fluctuating light conditions. Influences thylakoid ultrastructure, including lumen size and organization. During photosynthetic response on transition from dark to low light, involved in a sequential mechanism of adaptation; VCCN1 and CLCe first trigger the activation of photoprotection, which is later down-regulated by KEA3 to a low steady state, while adjusting electron transport. On transition from low to high light, accelerates the activation of photoprotection by building up a pH gradient across the thylakoid membrane. This is Voltage-dependent chloride channel 1, chloroplastic from Arabidopsis thaliana (Mouse-ear cress).